A 905-amino-acid chain; its full sequence is Isoleucine--tRNA ligase (905 aa).

The 'HIGH' region motif lies at 56–66; it reads PYANGNIHMGT. Glu563 lines the L-isoleucyl-5'-AMP pocket. Positions 604–608 match the 'KMSKS' region motif; that stretch reads KMSKS. Residue Lys607 coordinates ATP.

It belongs to the class-I aminoacyl-tRNA synthetase family. IleS type 1 subfamily. As to quaternary structure, monomer.

It is found in the cytoplasm. It catalyses the reaction tRNA(Ile) + L-isoleucine + ATP = L-isoleucyl-tRNA(Ile) + AMP + diphosphate. In terms of biological role, catalyzes the attachment of isoleucine to tRNA(Ile). As IleRS can inadvertently accommodate and process structurally similar amino acids such as valine, to avoid such errors it has two additional distinct tRNA(Ile)-dependent editing activities. One activity is designated as 'pretransfer' editing and involves the hydrolysis of activated Val-AMP. The other activity is designated 'posttransfer' editing and involves deacylation of mischarged Val-tRNA(Ile). In Pelagibacter ubique (strain HTCC1062), this protein is Isoleucine--tRNA ligase.